A 68-amino-acid chain; its full sequence is Large ribosomal subunit protein bL35 (68 aa).

The tract at residues 29-68 (GGVSHYNTKKSSKRKRQGRKPQYVPKNLEHKVKALLPNDV) is disordered. The segment covering 35–47 (NTKKSSKRKRQGR) has biased composition (basic residues).

This sequence belongs to the bacterial ribosomal protein bL35 family.

The polypeptide is Large ribosomal subunit protein bL35 (Sulfurihydrogenibium sp. (strain YO3AOP1)).